We begin with the raw amino-acid sequence, 370 residues long: DNA replication and repair protein RecF (370 aa).

An ATP-binding site is contributed by 30 to 37; that stretch reads GENAQGKT.

The protein belongs to the RecF family.

Its subcellular location is the cytoplasm. In terms of biological role, the RecF protein is involved in DNA metabolism; it is required for DNA replication and normal SOS inducibility. RecF binds preferentially to single-stranded, linear DNA. It also seems to bind ATP. The polypeptide is DNA replication and repair protein RecF (Staphylococcus aureus (strain USA300)).